Consider the following 352-residue polypeptide: Phenylalanine--tRNA ligase alpha subunit (352 aa).

Position 258 (Glu258) interacts with Mg(2+).

The protein belongs to the class-II aminoacyl-tRNA synthetase family. Phe-tRNA synthetase alpha subunit type 1 subfamily. As to quaternary structure, tetramer of two alpha and two beta subunits. The cofactor is Mg(2+).

It is found in the cytoplasm. The enzyme catalyses tRNA(Phe) + L-phenylalanine + ATP = L-phenylalanyl-tRNA(Phe) + AMP + diphosphate + H(+). This is Phenylalanine--tRNA ligase alpha subunit from Staphylococcus saprophyticus subsp. saprophyticus (strain ATCC 15305 / DSM 20229 / NCIMB 8711 / NCTC 7292 / S-41).